The sequence spans 987 residues: Pentatricopeptide repeat-containing protein At1g06710, mitochondrial (987 aa).

Residues 1–42 (MNKTVVRCLLSRSHHPLIHFSTNLSLLHRVFTCSRYLTARFM) constitute a mitochondrion transit peptide. PPR repeat units lie at residues 164 to 198 (TAPV…DKEV), 199 to 233 (FGEF…RFRP), 234 to 268 (SRST…NLRM), 269 to 299 (DGFT…ENFV), 301 to 335 (DTVF…SCLP), 336 to 370 (NVVT…GCYP), 371 to 405 (SPKI…GHMP), 406 to 446 (GYVV…GVVL), 447 to 481 (NKIN…GFIP), 482 to 516 (DTST…GLVA), 517 to 551 (DVYT…GCTP), 552 to 586 (NVVT…GCLP), 587 to 621 (NIVT…KDVP), 638 to 672 (NVVT…GCEP), 673 to 707 (NQIV…GFPA), 708 to 742 (TLYT…SCAP), 743 to 777 (NVVI…GCQP), 778 to 812 (NVVT…GVAP), 813 to 847 (NYVT…HWPT), 881 to 915 (FLSV…SATL), 918 to 952 (YSST…GVIP), and 953 to 987 (EMQS…VCPL).

It belongs to the PPR family. P subfamily.

It is found in the mitochondrion. This is Pentatricopeptide repeat-containing protein At1g06710, mitochondrial from Arabidopsis thaliana (Mouse-ear cress).